The following is a 102-amino-acid chain: Death-associated protein 1 (102 aa).

The tract at residues 1–102 is disordered; it reads MSSPPEGKLE…RTQHIQQPRK (102 aa). An N-acetylserine modification is found at serine 2. Serine 3 bears the Phosphoserine; by MTOR mark. Lysine 29 is subject to N6-acetyllysine. Residues 32-43 show a composition bias toward basic and acidic residues; sequence HTGDTKEEKDKD. Serine 49 is modified (phosphoserine). A Phosphoserine; by MTOR modification is found at serine 51. Position 91 is a phosphoserine (serine 91). Over residues 92-102 the composition is skewed to polar residues; the sequence is PRTQHIQQPRK.

It belongs to the DAP-DAPL1 family. In terms of assembly, associates with ribosomes; inhibiting translation. Interacts with eiF5a (EIF5A and EIF5A2); inhibiting translation. Post-translationally, phosphorylated. Phosphorylation by MTOR inhibits the suppressive activity of DAP toward autophagy.

Its function is as follows. Ribosome-binding protein involved in ribosome hibernation, a process during which ribosomes are stabilized in an inactive state and preserved from proteasomal degradation. Acts via its association with eiF5a (EIF5A and EIF5A2) at the polypeptide exit tunnel of the ribosome, preventing mRNA translation. Involved in ribosome hibernation in the mature oocyte by preventing mRNA translation, leading to ribosome inactivation. Ribosomes, which are produced in large quantities during oogenesis, are stored and translationally repressed in the oocyte and early embryo. Also acts as a negative regulator of autophagy. Involved in mediating interferon-gamma-induced cell death. This chain is Death-associated protein 1, found in Homo sapiens (Human).